We begin with the raw amino-acid sequence, 217 residues long: MEGSFSDGGALPEGLAEEAEPQGAAWSGDSGTVSQSHSSASGPWEDEGAEDGAPGRDLPLLRRAAAGYAACLLPGAGARPEVEALDASLEDLLTRVDEFVGMLDMLRGDSSHVVSEGVPRIHAKAAEMRRIYSRIDRLEAFVRMVGGRVARMEEQVTKAEAELGTFPRAFKKLLHTMNVPSLFSKSAPSRPQQAGYEAPVLFRTEDYFPCCSERPQL.

The tract at residues 1 to 57 (MEGSFSDGGALPEGLAEEAEPQGAAWSGDSGTVSQSHSSASGPWEDEGAEDGAPGRD) is disordered. A compositionally biased stretch (polar residues) spans 29 to 41 (DSGTVSQSHSSAS). The stretch at 136 to 165 (DRLEAFVRMVGGRVARMEEQVTKAEAELGT) forms a coiled coil. Threonine 165 is subject to Phosphothreonine.

This sequence belongs to the BLOC1S4 family. As to quaternary structure, interacts with BLOC1S5 and BLOC1S6. Component of the biogenesis of lysosome-related organelles complex 1 (BLOC-1) composed of BLOC1S1, BLOC1S2, BLOC1S3, BLOC1S4, BLOC1S5, BLOC1S6, DTNBP1/BLOC1S7 and SNAPIN/BLOC1S8. Octamer composed of one copy each BLOC1S1, BLOC1S2, BLOC1S3, BLOC1S4, BLOC1S5, BLOC1S6, DTNBP1/BLOC1S7 and SNAPIN/BLOC1S8. The BLOC-1 complex associates with the AP-3 protein complex and membrane protein cargos.

It localises to the cytoplasm. Functionally, component of the BLOC-1 complex, a complex that is required for normal biogenesis of lysosome-related organelles (LRO), such as platelet dense granules and melanosomes. In concert with the AP-3 complex, the BLOC-1 complex is required to target membrane protein cargos into vesicles assembled at cell bodies for delivery into neurites and nerve terminals. The BLOC-1 complex, in association with SNARE proteins, is also proposed to be involved in neurite extension. Plays a role in intracellular vesicle trafficking. In Homo sapiens (Human), this protein is Biogenesis of lysosome-related organelles complex 1 subunit 4 (BLOC1S4).